The primary structure comprises 138 residues: Ribulose bisphosphate carboxylase small subunit (138 aa).

This sequence belongs to the RuBisCO small chain family. In terms of assembly, heterohexadecamer of 8 large and 8 small subunits.

The protein localises to the plastid. It localises to the chloroplast. RuBisCO catalyzes two reactions: the carboxylation of D-ribulose 1,5-bisphosphate, the primary event in carbon dioxide fixation, as well as the oxidative fragmentation of the pentose substrate in the photorespiration process. Both reactions occur simultaneously and in competition at the same active site. Although the small subunit is not catalytic it is essential for maximal activity. The polypeptide is Ribulose bisphosphate carboxylase small subunit (Cyanidium caldarium (Red alga)).